The chain runs to 128 residues: NADH-quinone oxidoreductase subunit A (128 aa).

Transmembrane regions (helical) follow at residues 5–25 (IPIL…VVIA), 72–92 (LTAM…PWAV), and 100–120 (FALV…AYVW).

This sequence belongs to the complex I subunit 3 family. As to quaternary structure, NDH-1 is composed of 14 different subunits. Subunits NuoA, H, J, K, L, M, N constitute the membrane sector of the complex.

Its subcellular location is the cell membrane. It catalyses the reaction a quinone + NADH + 5 H(+)(in) = a quinol + NAD(+) + 4 H(+)(out). Its function is as follows. NDH-1 shuttles electrons from NADH, via FMN and iron-sulfur (Fe-S) centers, to quinones in the respiratory chain. The immediate electron acceptor for the enzyme in this species is believed to be a menaquinone. Couples the redox reaction to proton translocation (for every two electrons transferred, four hydrogen ions are translocated across the cytoplasmic membrane), and thus conserves the redox energy in a proton gradient. This Mycobacterium bovis (strain ATCC BAA-935 / AF2122/97) protein is NADH-quinone oxidoreductase subunit A.